A 158-amino-acid polypeptide reads, in one-letter code: Transcription elongation factor GreA (158 aa).

A coiled-coil region spans residues 45 to 72 (AEYHAAREQQSFIEGRIKQLEGELSHAE).

This sequence belongs to the GreA/GreB family.

Functionally, necessary for efficient RNA polymerase transcription elongation past template-encoded arresting sites. The arresting sites in DNA have the property of trapping a certain fraction of elongating RNA polymerases that pass through, resulting in locked ternary complexes. Cleavage of the nascent transcript by cleavage factors such as GreA or GreB allows the resumption of elongation from the new 3'terminus. GreA releases sequences of 2 to 3 nucleotides. In Xylella fastidiosa (strain M23), this protein is Transcription elongation factor GreA.